A 244-amino-acid chain; its full sequence is Phosphonates import ATP-binding protein PhnC (244 aa).

One can recognise an ABC transporter domain in the interval Ile-6–Gln-244. Gly-41–Ser-48 contributes to the ATP binding site.

This sequence belongs to the ABC transporter superfamily. Phosphonates importer (TC 3.A.1.9.1) family. In terms of assembly, the complex is composed of two ATP-binding proteins (PhnC), two transmembrane proteins (PhnE) and a solute-binding protein (PhnD).

Its subcellular location is the cell inner membrane. The catalysed reaction is phosphonate(out) + ATP + H2O = phosphonate(in) + ADP + phosphate + H(+). In terms of biological role, part of the ABC transporter complex PhnCDE involved in phosphonates import. Responsible for energy coupling to the transport system. This Trichormus variabilis (strain ATCC 29413 / PCC 7937) (Anabaena variabilis) protein is Phosphonates import ATP-binding protein PhnC.